The sequence spans 302 residues: Mitochondrial glycine transporter (302 aa).

Solcar repeat units lie at residues 22-112 (HPVF…LKHH), 119-203 (PKPL…AKKL), and 213-297 (FSPV…MMEK). 6 helical membrane-spanning segments follow: residues 28–53 (FVCG…TRLQ), 87–113 (GVSP…KHHF), 125–150 (VMLG…TRYE), 178–201 (GLTA…TRAK), 217–243 (LNFG…KTHI), and 272–290 (GGLP…AWTV).

Belongs to the mitochondrial carrier (TC 2.A.29) family. SLC25A38 subfamily.

It is found in the mitochondrion inner membrane. It catalyses the reaction glycine(in) = glycine(out). In terms of biological role, mitochondrial glycine transporter that imports glycine into the mitochondrial matrix. Plays an important role in providing glycine for the first enzymatic step in heme biosynthesis, the condensation of glycine with succinyl-CoA to produce 5-aminolevulinate (ALA) in the mitochondrial matrix. Required during erythropoiesis. Functionally, may play a role as pro-apoptotic protein that induces caspase-dependent apoptosis. In Xenopus tropicalis (Western clawed frog), this protein is Mitochondrial glycine transporter.